Reading from the N-terminus, the 156-residue chain is Small ribosomal subunit protein uS7 (156 aa).

The protein belongs to the universal ribosomal protein uS7 family. Part of the 30S ribosomal subunit. Contacts proteins S9 and S11.

One of the primary rRNA binding proteins, it binds directly to 16S rRNA where it nucleates assembly of the head domain of the 30S subunit. Is located at the subunit interface close to the decoding center, probably blocks exit of the E-site tRNA. The sequence is that of Small ribosomal subunit protein uS7 from Paramagnetospirillum magneticum (strain ATCC 700264 / AMB-1) (Magnetospirillum magneticum).